Here is a 392-residue protein sequence, read N- to C-terminus: Phosphoglycerate kinase (392 aa).

Residues 21-23, Arg36, 59-62, Arg113, and Arg146 each bind substrate; these read DLN and HLGR. ATP is bound by residues Lys197, Glu319, and 345–348; that span reads GGDT.

It belongs to the phosphoglycerate kinase family. Monomer.

The protein localises to the cytoplasm. The enzyme catalyses (2R)-3-phosphoglycerate + ATP = (2R)-3-phospho-glyceroyl phosphate + ADP. It functions in the pathway carbohydrate degradation; glycolysis; pyruvate from D-glyceraldehyde 3-phosphate: step 2/5. This chain is Phosphoglycerate kinase, found in Thioalkalivibrio sulfidiphilus (strain HL-EbGR7).